A 279-amino-acid chain; its full sequence is Dermonecrotic toxin LspiSicTox-betaIE3i (279 aa).

Residue His-5 is part of the active site. 2 residues coordinate Mg(2+): Glu-25 and Asp-27. His-41 acts as the Nucleophile in catalysis. Disulfide bonds link Cys-45–Cys-51 and Cys-47–Cys-190. Asp-85 provides a ligand contact to Mg(2+).

The protein belongs to the arthropod phospholipase D family. Class II subfamily. Mg(2+) is required as a cofactor. Expressed by the venom gland.

It is found in the secreted. It carries out the reaction an N-(acyl)-sphingosylphosphocholine = an N-(acyl)-sphingosyl-1,3-cyclic phosphate + choline. It catalyses the reaction an N-(acyl)-sphingosylphosphoethanolamine = an N-(acyl)-sphingosyl-1,3-cyclic phosphate + ethanolamine. The enzyme catalyses a 1-acyl-sn-glycero-3-phosphocholine = a 1-acyl-sn-glycero-2,3-cyclic phosphate + choline. The catalysed reaction is a 1-acyl-sn-glycero-3-phosphoethanolamine = a 1-acyl-sn-glycero-2,3-cyclic phosphate + ethanolamine. In terms of biological role, dermonecrotic toxins cleave the phosphodiester linkage between the phosphate and headgroup of certain phospholipids (sphingolipid and lysolipid substrates), forming an alcohol (often choline) and a cyclic phosphate. This toxin acts on sphingomyelin (SM). It may also act on ceramide phosphoethanolamine (CPE), lysophosphatidylcholine (LPC) and lysophosphatidylethanolamine (LPE), but not on lysophosphatidylserine (LPS), and lysophosphatidylglycerol (LPG). It acts by transphosphatidylation, releasing exclusively cyclic phosphate products as second products. Induces dermonecrosis, hemolysis, increased vascular permeability, edema, inflammatory response, and platelet aggregation. This is Dermonecrotic toxin LspiSicTox-betaIE3i from Loxosceles spinulosa (Recluse spider).